Here is a 582-residue protein sequence, read N- to C-terminus: L-fucose isomerase (582 aa).

Active-site proton acceptor residues include glutamate 333 and aspartate 357. Mn(2+) contacts are provided by glutamate 333, aspartate 357, and histidine 520.

The protein belongs to the L-fucose isomerase family. Mn(2+) serves as cofactor.

The protein localises to the cytoplasm. The enzyme catalyses L-fucose = L-fuculose. It participates in carbohydrate degradation; L-fucose degradation; L-lactaldehyde and glycerone phosphate from L-fucose: step 1/3. Its function is as follows. Converts the aldose L-fucose into the corresponding ketose L-fuculose. The sequence is that of L-fucose isomerase from Vibrio vulnificus (strain YJ016).